Consider the following 502-residue polypeptide: uncharacterized protein (502 aa).

This is an uncharacterized protein from Agrobacterium vitis (Rhizobium vitis).